The chain runs to 344 residues: GTP 3',8-cyclase (344 aa).

In terms of domain architecture, Radical SAM core spans 19-245 (PFGRAVTYLR…DIPYRTGGPA (227 aa)). GTP is bound at residue Arg-28. Positions 35 and 39 each coordinate [4Fe-4S] cluster. Tyr-41 serves as a coordination point for S-adenosyl-L-methionine. Cys-42 is a [4Fe-4S] cluster binding site. Arg-77 lines the GTP pocket. Gly-81 lines the S-adenosyl-L-methionine pocket. Residue Thr-111 participates in GTP binding. Ser-135 is a binding site for S-adenosyl-L-methionine. Residue Lys-171 participates in GTP binding. Met-205 provides a ligand contact to S-adenosyl-L-methionine. 2 residues coordinate [4Fe-4S] cluster: Cys-268 and Cys-271. A GTP-binding site is contributed by 273–275 (RVR). Position 285 (Cys-285) interacts with [4Fe-4S] cluster.

It belongs to the radical SAM superfamily. MoaA family. As to quaternary structure, monomer and homodimer. Requires [4Fe-4S] cluster as cofactor.

It carries out the reaction GTP + AH2 + S-adenosyl-L-methionine = (8S)-3',8-cyclo-7,8-dihydroguanosine 5'-triphosphate + 5'-deoxyadenosine + L-methionine + A + H(+). Its pathway is cofactor biosynthesis; molybdopterin biosynthesis. Functionally, catalyzes the cyclization of GTP to (8S)-3',8-cyclo-7,8-dihydroguanosine 5'-triphosphate. The sequence is that of GTP 3',8-cyclase from Brucella ovis (strain ATCC 25840 / 63/290 / NCTC 10512).